The following is a 316-amino-acid chain: Taste receptor type 2 member 3 (316 aa).

At Met1–Glu6 the chain is on the extracellular side. The helical transmembrane segment at Gly7 to Ile27 threads the bilayer. At Glu28 to Ser42 the chain is on the cytoplasmic side. Residues Leu43–Leu63 form a helical membrane-spanning segment. Over Thr64–His94 the chain is Extracellular. The chain crosses the membrane as a helical span at residues Leu95 to Ser115. Residues His116–Arg128 lie on the Cytoplasmic side of the membrane. A helical transmembrane segment spans residues Val129–Ile149. Residues Asn150–Thr186 lie on the Extracellular side of the membrane. N-linked (GlcNAc...) asparagine glycosylation occurs at Asn166. Residues Leu187–Leu207 traverse the membrane as a helical segment. At Gly208 to Arg234 the chain is on the cytoplasmic side. A helical transmembrane segment spans residues Ile235–Phe255. The Extracellular segment spans residues Gly256 to Lys266. The chain crosses the membrane as a helical span at residues Met267–Gly287. Residues Asn288–Ser316 lie on the Cytoplasmic side of the membrane.

This sequence belongs to the G-protein coupled receptor T2R family. Expressed in subsets of taste receptor cells of the tongue and palate epithelium and exclusively in gustducin-positive cells. Expressed in the antrum and fundus (part of the stomach), duodenum and in gastric endocrine cells.

The protein resides in the membrane. In terms of biological role, gustducin-coupled receptor implicated in the perception of bitter compounds in the oral cavity and the gastrointestinal tract. Signals through PLCB2 and the calcium-regulated cation channel TRPM5. This chain is Taste receptor type 2 member 3 (TAS2R3), found in Homo sapiens (Human).